We begin with the raw amino-acid sequence, 383 residues long: MIKPHGGKLVNRIVEGAKREELIKKAGEMPRIMLNRDELTAVDNIATGLFSPLEGFLTSEDYNRVVEEMRLADGTVWSIPEVLGVTREEADNLKEGQDVGLYFEEDDELYAILHLEEKYTCDPEREAELVYGTTEEEHPGVKNVYKRDEILLGGKISLINRLKYDDFNNYRLTPAETREKIKEKGWQTVVGFQTRNPIHRAHEYLQKCALETVDGLFLSPLVGRTKASDIPADIRIKSYEVVLDKFYPRDRTMMVVFPAAMHYAGPREAIFHALCRKNYGCTHFIVGRDHAGVGDYYGTYDAQKIFDEFDPEEIGITPLKFEYSFYCKKCGGMASGKTCPHSADDHIFLSGTRVRKLLREGKKPPKEMTRPEVAEVLIQGMQQ.

It belongs to the sulfate adenylyltransferase family.

The enzyme catalyses sulfate + ATP + H(+) = adenosine 5'-phosphosulfate + diphosphate. It participates in sulfur metabolism; hydrogen sulfide biosynthesis; sulfite from sulfate: step 1/3. The chain is Sulfate adenylyltransferase from Halothermothrix orenii (strain H 168 / OCM 544 / DSM 9562).